A 112-amino-acid chain; its full sequence is Large ribosomal subunit protein mL53 (112 aa).

It belongs to the mitochondrion-specific ribosomal protein mL53 family. Component of the mitochondrial ribosome large subunit (39S) which comprises a 16S rRNA and about 50 distinct proteins.

It is found in the mitochondrion. The polypeptide is Large ribosomal subunit protein mL53 (MRPL53) (Bos taurus (Bovine)).